Here is a 555-residue protein sequence, read N- to C-terminus: MRILYLASLLFLITLYLSPTFGWGGGRDCESHRSEYTCKSDRSCAYLPFVSCCGKKEFFCVNRDHRNCCDDLSCAKNTRTGEIFEIWSSCKPHRDFVPYHSPNTTTCESLGCEARGMECEWVESSPCYGTSCCPRIPRCVGHHGGGHKCDRMRCPEGFYCEEQGGSACCVPHHDGCGNIQCPWGHYCVNEHGKCRCVPHRPPPRPPVDQCRNQHCPHGYSCRVIKGCATCVRDARPPHNLCRGFGCPEGSHCEVLEKHPVCVRNHVPPHPPPPPQICGSVNCGPGYICTIINGHPTCIRGDGYLCNQTRCPHDYQCETISTNIVKCSPKNDECKWHRCPPGSSCFNSRNGPHCLANNVFPQLCKVTQCPTDFSCKMIRGNPTCIKARPPVPPPHCSTCAELSSACNHVGMICIQVPSNCTNTRFPCCPSHPICIHPSTTAASTIATTASTVATTTSATTAGTTTGGTTTGGSTSDSSAASSADSSAASSSPSSSAASSAASSEPSSSAASSSAPSSASSSAPSSASSSAPSSSASSSAASSAASSESSESSSATS.

The first 22 residues, 1-22, serve as a signal peptide directing secretion; the sequence is MRILYLASLLFLITLYLSPTFG. One can recognise a DSCP-N domain in the interval 27-144; it reads RDCESHRSEY…RIPRCVGHHG (118 aa). Asn103 carries an N-linked (GlcNAc...) asparagine glycan. Follistatin-like domains follow at residues 148–170, 175–197, 209–231, 240–262, 276–298, 304–327, 332–354, and 362–384; these read KCDR…ACCV, GCGN…CRCV, QCRN…ATCV, LCRG…PVCV, ICGS…PTCI, LCNQ…VKCS, ECKW…PHCL, and LCKV…PTCI. A glycan (N-linked (GlcNAc...) asparagine) is linked at Asn306. Asn418 is a glycosylation site (N-linked (GlcNAc...) asparagine). Residues 454–555 are disordered; it reads TTSATTAGTT…ESSESSSATS (102 aa). Over residues 470-555 the composition is skewed to low complexity; that stretch reads GGSTSDSSAA…ESSESSSATS (86 aa).

It localises to the spore wall. The chain is Prespore protein Dp87 (cotD) from Dictyostelium discoideum (Social amoeba).